A 402-amino-acid chain; its full sequence is Homoserine O-acetyltransferase (402 aa).

Polar residues predominate over residues 1 to 17 (MDWQTTSADTAPSSFIT). The tract at residues 1 to 39 (MDWQTTSADTAPSSFITEEQDRSLFGKPPASGAWKESDP) is disordered. The AB hydrolase-1 domain maps to 78 to 388 (NAVLVLHALT…HFGHDGFLIE (311 aa)). S183 acts as the Nucleophile in catalysis. R255 contacts substrate. Residues D349 and H382 contribute to the active site. Position 383 (D383) interacts with substrate.

It belongs to the AB hydrolase superfamily. MetX family. Homodimer.

The protein resides in the cytoplasm. It carries out the reaction L-homoserine + acetyl-CoA = O-acetyl-L-homoserine + CoA. Its pathway is amino-acid biosynthesis; L-methionine biosynthesis via de novo pathway; O-acetyl-L-homoserine from L-homoserine: step 1/1. In terms of biological role, transfers an acetyl group from acetyl-CoA to L-homoserine, forming acetyl-L-homoserine. The polypeptide is Homoserine O-acetyltransferase (Leifsonia xyli subsp. xyli (strain CTCB07)).